We begin with the raw amino-acid sequence, 197 residues long: 5'-deoxynucleotidase plu3092 (197 aa).

Residues 16-17 (RW) and His-31 each bind substrate. The 113-residue stretch at 28–140 (VSEHSLQVAF…IKQADSLCAY (113 aa)) folds into the HD domain. His-31, His-66, and Asp-67 together coordinate a divalent metal cation. Substrate is bound by residues Asp-67, 75 to 78 (DLPT), and Asp-135. Residue Asp-135 participates in a divalent metal cation binding.

This sequence belongs to the 5DNU family. Homodimer. The cofactor is a divalent metal cation.

It localises to the cytoplasm. It catalyses the reaction a 2'-deoxyribonucleoside 5'-phosphate + H2O = a 2'-deoxyribonucleoside + phosphate. Functionally, catalyzes the strictly specific dephosphorylation of 2'-deoxyribonucleoside 5'-monophosphates. The protein is 5'-deoxynucleotidase plu3092 of Photorhabdus laumondii subsp. laumondii (strain DSM 15139 / CIP 105565 / TT01) (Photorhabdus luminescens subsp. laumondii).